The sequence spans 108 residues: Large ribosomal subunit protein uL24 (108 aa).

This sequence belongs to the universal ribosomal protein uL24 family. As to quaternary structure, part of the 50S ribosomal subunit.

In terms of biological role, one of two assembly initiator proteins, it binds directly to the 5'-end of the 23S rRNA, where it nucleates assembly of the 50S subunit. One of the proteins that surrounds the polypeptide exit tunnel on the outside of the subunit. This Trichlorobacter lovleyi (strain ATCC BAA-1151 / DSM 17278 / SZ) (Geobacter lovleyi) protein is Large ribosomal subunit protein uL24.